The primary structure comprises 143 residues: Large ribosomal subunit protein uL13 (143 aa).

This sequence belongs to the universal ribosomal protein uL13 family. Part of the 50S ribosomal subunit.

In terms of biological role, this protein is one of the early assembly proteins of the 50S ribosomal subunit, although it is not seen to bind rRNA by itself. It is important during the early stages of 50S assembly. This Carboxydothermus hydrogenoformans (strain ATCC BAA-161 / DSM 6008 / Z-2901) protein is Large ribosomal subunit protein uL13.